The following is a 393-amino-acid chain: Metal tolerance protein C2 (393 aa).

The segment at 1–23 (MERSISFNPRGDNELPDDRSSDV) is disordered. Residues 1–113 (MERSISFNPR…VTSGNRQMKR (113 aa)) are Cytoplasmic-facing. Basic and acidic residues predominate over residues 11–21 (GDNELPDDRSS). Residues 114 to 134 (LFLLIALNVLYSTTELSIGIF) form a helical membrane-spanning segment. Over 135–139 (TGRVG) the chain is Vacuolar. Residues 140–160 (LVSDAFHLTFGCGLLTFSLFA) traverse the membrane as a helical segment. At 161–186 (MATSRKKPDHAYSYGYKRLEVLSAFT) the chain is on the cytoplasmic side. The helical transmembrane segment at 187–207 (NALFLMFMSFSLAVEALHAFI) threads the bilayer. The Vacuolar portion of the chain corresponds to 208 to 214 (QDESEHK). Residues 215-235 (HYLIVSAVTNLLVNLLGVWFF) traverse the membrane as a helical segment. Residues 236–259 (RNYARVNIAYRKAEDMNYHSVCLH) are Cytoplasmic-facing. A helical membrane pass occupies residues 260–280 (VISDSIRSAGLILASWLLSLG). Over 281-283 (VEN) the chain is Vacuolar. Residues 284–304 (AEVLCLGLVSVTVFMLVMPLF) traverse the membrane as a helical segment. Over 305–393 (KATGGVLLQM…QDLTLQTDYT (89 aa)) the chain is Cytoplasmic.

It belongs to the cation diffusion facilitator (CDF) transporter (TC 2.A.4) family.

Its subcellular location is the vacuole membrane. Its function is as follows. Involved in sequestration of excess metal in the cytoplasm into vacuoles to maintain metal homeostasis. The chain is Metal tolerance protein C2 (MTPC2) from Arabidopsis thaliana (Mouse-ear cress).